A 118-amino-acid chain; its full sequence is Fluoride-specific ion channel FluC 1 (118 aa).

4 helical membrane-spanning segments follow: residues 5–25 (FLLV…ISIF), 39–59 (FFIN…ALGP), 61–81 (WQLF…TFKV), and 98–118 (YVGL…MLGV). Residues glycine 71 and threonine 74 each contribute to the Na(+) site.

It belongs to the fluoride channel Fluc/FEX (TC 1.A.43) family.

It is found in the cell membrane. The catalysed reaction is fluoride(in) = fluoride(out). Na(+) is not transported, but it plays an essential structural role and its presence is essential for fluoride channel function. In terms of biological role, fluoride-specific ion channel. Important for reducing fluoride concentration in the cell, thus reducing its toxicity. The sequence is that of Fluoride-specific ion channel FluC 1 from Listeria innocua serovar 6a (strain ATCC BAA-680 / CLIP 11262).